A 408-amino-acid chain; its full sequence is D-inositol 3-phosphate glycosyltransferase (408 aa).

A 1D-myo-inositol 3-phosphate-binding site is contributed by histidine 7. Residues 13-14 and glycine 21 contribute to the UDP-N-acetyl-alpha-D-glucosamine site; that span reads QP. Residues 18-23, lysine 76, tyrosine 109, threonine 133, and arginine 153 each bind 1D-myo-inositol 3-phosphate; that span reads DAGGMN. UDP-N-acetyl-alpha-D-glucosamine-binding residues include arginine 227, lysine 232, and valine 288. Residues phenylalanine 297, arginine 298, and alanine 300 each contribute to the Mg(2+) site. UDP-N-acetyl-alpha-D-glucosamine is bound by residues glutamate 310 and glutamate 318. Threonine 324 lines the Mg(2+) pocket.

It belongs to the glycosyltransferase group 1 family. MshA subfamily. In terms of assembly, homodimer.

The catalysed reaction is 1D-myo-inositol 3-phosphate + UDP-N-acetyl-alpha-D-glucosamine = 1D-myo-inositol 2-acetamido-2-deoxy-alpha-D-glucopyranoside 3-phosphate + UDP + H(+). Catalyzes the transfer of a N-acetyl-glucosamine moiety to 1D-myo-inositol 3-phosphate to produce 1D-myo-inositol 2-acetamido-2-deoxy-glucopyranoside 3-phosphate in the mycothiol biosynthesis pathway. In Paenarthrobacter aurescens (strain TC1), this protein is D-inositol 3-phosphate glycosyltransferase.